We begin with the raw amino-acid sequence, 303 residues long: Acetaldehyde dehydrogenase 1 (303 aa).

The active-site Acyl-thioester intermediate is cysteine 130. NAD(+) contacts are provided by residues 161–169 (SVGPGTRKN) and asparagine 272.

The protein belongs to the acetaldehyde dehydrogenase family.

The enzyme catalyses acetaldehyde + NAD(+) + CoA = acetyl-CoA + NADH + H(+). This chain is Acetaldehyde dehydrogenase 1, found in Cupriavidus metallidurans (strain ATCC 43123 / DSM 2839 / NBRC 102507 / CH34) (Ralstonia metallidurans).